Reading from the N-terminus, the 179-residue chain is uncharacterized protein (179 aa).

A coiled-coil region spans residues 139-172 (IEDLGKYIKSDRIEKEALREELEKILNTLVKHLE).

This is an uncharacterized protein from Methanocaldococcus jannaschii (strain ATCC 43067 / DSM 2661 / JAL-1 / JCM 10045 / NBRC 100440) (Methanococcus jannaschii).